We begin with the raw amino-acid sequence, 213 residues long: Methylthioribulose-1-phosphate dehydratase (213 aa).

His104 and His106 together coordinate Zn(2+).

This sequence belongs to the aldolase class II family. MtnB subfamily. The cofactor is Zn(2+).

It catalyses the reaction 5-(methylsulfanyl)-D-ribulose 1-phosphate = 5-methylsulfanyl-2,3-dioxopentyl phosphate + H2O. Its pathway is amino-acid biosynthesis; L-methionine biosynthesis via salvage pathway; L-methionine from S-methyl-5-thio-alpha-D-ribose 1-phosphate: step 2/6. Its function is as follows. Catalyzes the dehydration of methylthioribulose-1-phosphate (MTRu-1-P) into 2,3-diketo-5-methylthiopentyl-1-phosphate (DK-MTP-1-P). In Stenotrophomonas maltophilia (strain R551-3), this protein is Methylthioribulose-1-phosphate dehydratase.